Consider the following 508-residue polypeptide: MFS-type transporter penM (508 aa).

The tract at residues 1 to 60 (MKDGEETPSVDGSTSASNREKLGTDLEIGPVDLSDGGKEEKVKDPNLVDWDGPDDPENPL) is disordered. A compositionally biased stretch (basic and acidic residues) spans 35-46 (DGGKEEKVKDPN). Residue Asn61 is glycosylated (N-linked (GlcNAc...) asparagine). The helical transmembrane segment at 73–93 (SIALITFLTPLGSSMFAPGVG) threads the bilayer. Residue Asn100 is glycosylated (N-linked (GlcNAc...) asparagine). A run of 6 helical transmembrane segments spans residues 108-128 (SFVV…IAPL), 143-163 (ILYV…SLVV), 166-186 (FFAG…IADM), 197-217 (AAWA…GAYL), 225-245 (WSFY…LFSI), and 299-319 (PIVF…YLLF). The short motif at 293–307 (KMLFRSPIVFLLSLY) is the Peroxisomal targeting signal element. A glycan (N-linked (GlcNAc...) asparagine) is linked at Asn331. 5 helical membrane passes run 335–355 (GAVG…LFLI), 379–399 (LPPM…YGWT), 407–427 (IVPI…FMCV), 435–457 (FTNY…GALL), and 475–495 (SLLG…WIYG).

It belongs to the major facilitator superfamily.

It localises to the peroxisome membrane. Functionally, MFS-type transporter involved in penicillin production, most likely through the translocation of isopenicillin N from the cytosol to the peroxisomal lumen across the peroxisomal membrane. This Penicillium rubens (strain ATCC 28089 / DSM 1075 / NRRL 1951 / Wisconsin 54-1255) (Penicillium chrysogenum) protein is MFS-type transporter penM.